The primary structure comprises 231 residues: NADH-ubiquinone oxidoreductase chain 4 (231 aa).

Transmembrane regions (helical) follow at residues 1–21, 34–54, 63–85, 89–111, 128–148, and 169–189; these read PIAG…YGII, MFLP…LTCL, IAYS…TPWG, AMAL…NTTY, ILPM…AIPP, and TIIL…HMLL.

This sequence belongs to the complex I subunit 4 family.

The protein localises to the mitochondrion membrane. The catalysed reaction is a ubiquinone + NADH + 5 H(+)(in) = a ubiquinol + NAD(+) + 4 H(+)(out). In terms of biological role, core subunit of the mitochondrial membrane respiratory chain NADH dehydrogenase (Complex I) that is believed to belong to the minimal assembly required for catalysis. Complex I functions in the transfer of electrons from NADH to the respiratory chain. The immediate electron acceptor for the enzyme is believed to be ubiquinone. This chain is NADH-ubiquinone oxidoreductase chain 4 (MT-ND4), found in Bothrops bilineatus (Green jararaca).